A 379-amino-acid chain; its full sequence is Homoserine O-succinyltransferase (379 aa).

Residues 51–360 (NAVLICHALS…DSPYGHDAFL (310 aa)) enclose the AB hydrolase-1 domain. The active-site Nucleophile is the Ser-157. A substrate-binding site is contributed by Arg-227. Catalysis depends on residues Asp-323 and His-356. Position 357 (Asp-357) interacts with substrate.

It belongs to the AB hydrolase superfamily. MetX family. In terms of assembly, homodimer.

The protein localises to the cytoplasm. The catalysed reaction is L-homoserine + succinyl-CoA = O-succinyl-L-homoserine + CoA. The protein operates within amino-acid biosynthesis; L-methionine biosynthesis via de novo pathway; O-succinyl-L-homoserine from L-homoserine: step 1/1. In terms of biological role, transfers a succinyl group from succinyl-CoA to L-homoserine, forming succinyl-L-homoserine. The polypeptide is Homoserine O-succinyltransferase (Pseudomonas putida (strain GB-1)).